Reading from the N-terminus, the 270-residue chain is 3-phenylpropionate-dihydrodiol/cinnamic acid-dihydrodiol dehydrogenase (270 aa).

An NAD(+)-binding site is contributed by 10-34; it reads FITGGGSGLGLALVERFIEKGAQVA. A substrate-binding site is contributed by Ser-143. Catalysis depends on Tyr-156, which acts as the Proton acceptor.

The protein belongs to the short-chain dehydrogenases/reductases (SDR) family.

The enzyme catalyses 3-(cis-5,6-dihydroxycyclohexa-1,3-dien-1-yl)propanoate + NAD(+) = 3-(2,3-dihydroxyphenyl)propanoate + NADH + H(+). The catalysed reaction is (2E)-3-(cis-5,6-dihydroxycyclohexa-1,3-dien-1-yl)prop-2-enoate + NAD(+) = (2E)-3-(2,3-dihydroxyphenyl)prop-2-enoate + NADH + H(+). The protein operates within aromatic compound metabolism; 3-phenylpropanoate degradation. Converts 3-phenylpropionate-dihydrodiol (PP-dihydrodiol) and cinnamic acid-dihydrodiol (CI-dihydrodiol) into 3-(2,3-dihydroxylphenyl)propanoic acid (DHPP) and 2,3-dihydroxicinnamic acid (DHCI), respectively. This Escherichia coli protein is 3-phenylpropionate-dihydrodiol/cinnamic acid-dihydrodiol dehydrogenase (hcaB).